The following is a 485-amino-acid chain: Subtilisin-like protease 1 (485 aa).

Residues 1-19 (MGIFRFISISLAAVSAANA) form the signal peptide. A propeptide spanning residues 20–116 (GHILSMGHAK…VEPDTTITIH (97 aa)) is cleaved from the precursor. One can recognise an Inhibitor I9 domain in the interval 34 to 116 (SYIVVMKDGT…VEPDTTITIH (83 aa)). The region spanning 126–400 (SWGLARISSQ…NILINNGDAK (275 aa)) is the Peptidase S8 domain. Residues D158 and H190 each act as charge relay system in the active site. A glycan (N-linked (GlcNAc...) asparagine) is linked at N251. S345 functions as the Charge relay system in the catalytic mechanism. Residues 377-394 (GTSSVTNPGPGTRTNILI) show a composition bias toward polar residues. The tract at residues 377–462 (GTSSVTNPGP…HTPFPNDDFN (86 aa)) is disordered. A compositionally biased stretch (pro residues) spans 409–418 (PSQPPKPSQP). Residues 419–428 (SKPQQPSEPQ) show a composition bias toward low complexity. Pro residues predominate over residues 433-455 (PQEPAPGQPAPAPAPVPQHPHTP).

It belongs to the peptidase S8 family.

It is found in the secreted. Functionally, secreted subtilisin-like serine protease with keratinolytic activity that contributes to pathogenicity. This is Subtilisin-like protease 1 (SUB1) from Arthroderma otae (Microsporum canis).